A 482-amino-acid polypeptide reads, in one-letter code: Ribosomal RNA small subunit methyltransferase F (482 aa).

Residues 119–125 (ASAPGSK), E143, D170, and D188 each bind S-adenosyl-L-methionine. The Nucleophile role is filled by C241.

This sequence belongs to the class I-like SAM-binding methyltransferase superfamily. RsmB/NOP family.

The protein resides in the cytoplasm. It carries out the reaction cytidine(1407) in 16S rRNA + S-adenosyl-L-methionine = 5-methylcytidine(1407) in 16S rRNA + S-adenosyl-L-homocysteine + H(+). Its function is as follows. Specifically methylates the cytosine at position 1407 (m5C1407) of 16S rRNA. In Shewanella sp. (strain ANA-3), this protein is Ribosomal RNA small subunit methyltransferase F.